The following is a 388-amino-acid chain: Succinate--CoA ligase [ADP-forming] subunit beta (388 aa).

The ATP-grasp domain maps to 9 to 244 (KQLFARYGLP…PSQEDSREAH (236 aa)). Residues Lys-46, 53 to 55 (GRG), Glu-99, Thr-102, and Glu-107 each bind ATP. Mg(2+) is bound by residues Asn-199 and Asp-213. Residues Asn-264 and 321–323 (GIV) contribute to the substrate site.

Belongs to the succinate/malate CoA ligase beta subunit family. In terms of assembly, heterotetramer of two alpha and two beta subunits. The cofactor is Mg(2+).

It catalyses the reaction succinate + ATP + CoA = succinyl-CoA + ADP + phosphate. It carries out the reaction GTP + succinate + CoA = succinyl-CoA + GDP + phosphate. The protein operates within carbohydrate metabolism; tricarboxylic acid cycle; succinate from succinyl-CoA (ligase route): step 1/1. Functionally, succinyl-CoA synthetase functions in the citric acid cycle (TCA), coupling the hydrolysis of succinyl-CoA to the synthesis of either ATP or GTP and thus represents the only step of substrate-level phosphorylation in the TCA. The beta subunit provides nucleotide specificity of the enzyme and binds the substrate succinate, while the binding sites for coenzyme A and phosphate are found in the alpha subunit. The chain is Succinate--CoA ligase [ADP-forming] subunit beta from Pectobacterium carotovorum subsp. carotovorum (strain PC1).